The primary structure comprises 468 residues: ATP synthase subunit beta 2 (468 aa).

155-162 serves as a coordination point for ATP; it reads GGAGVGKT.

The protein belongs to the ATPase alpha/beta chains family. In terms of assembly, F-type ATPases have 2 components, CF(1) - the catalytic core - and CF(0) - the membrane proton channel. CF(1) has five subunits: alpha(3), beta(3), gamma(1), delta(1), epsilon(1). CF(0) has four main subunits: a(1), b(1), b'(1) and c(9-12).

It is found in the cell inner membrane. The catalysed reaction is ATP + H2O + 4 H(+)(in) = ADP + phosphate + 5 H(+)(out). In terms of biological role, produces ATP from ADP in the presence of a proton gradient across the membrane. The catalytic sites are hosted primarily by the beta subunits. In Chlorobium luteolum (strain DSM 273 / BCRC 81028 / 2530) (Pelodictyon luteolum), this protein is ATP synthase subunit beta 2.